The following is a 79-amino-acid chain: MTQINCDKELDTLGLKCPEPVMLVRAAIRKMDVGQVLLIIADDPATTRDIPGFCEFMEHELVGSETEEIPYRYWVRKSH.

The active-site Cysteine persulfide intermediate is Cys17.

This sequence belongs to the sulfur carrier protein TusA family.

It localises to the cytoplasm. Sulfur carrier protein which probably makes part of a sulfur-relay system. This is Sulfur carrier protein TusA from Idiomarina loihiensis (strain ATCC BAA-735 / DSM 15497 / L2-TR).